Here is a 67-residue protein sequence, read N- to C-terminus: Protein SlyX homolog (67 aa).

It belongs to the SlyX family.

The chain is Protein SlyX homolog from Thiobacillus denitrificans (strain ATCC 25259 / T1).